Here is a 20-residue protein sequence, read N- to C-terminus: Brevinin-1ITb (20 aa).

Position 8 is a methionine sulfoxide; partial (Met8). Cys14 and Cys20 form a disulfide bridge.

The protein belongs to the frog skin active peptide (FSAP) family. Brevinin subfamily. Expressed by the skin glands.

Its subcellular location is the secreted. Its function is as follows. Antimicrobial peptide. The chain is Brevinin-1ITb from Rana italica (Italian stream frog).